We begin with the raw amino-acid sequence, 540 residues long: Glucose-6-phosphate isomerase (540 aa).

The active-site Proton donor is E350. Active-site residues include H381 and K503.

This sequence belongs to the GPI family.

Its subcellular location is the cytoplasm. The enzyme catalyses alpha-D-glucose 6-phosphate = beta-D-fructose 6-phosphate. It participates in carbohydrate biosynthesis; gluconeogenesis. Its pathway is carbohydrate degradation; glycolysis; D-glyceraldehyde 3-phosphate and glycerone phosphate from D-glucose: step 2/4. In terms of biological role, catalyzes the reversible isomerization of glucose-6-phosphate to fructose-6-phosphate. This is Glucose-6-phosphate isomerase from Burkholderia orbicola (strain MC0-3).